Consider the following 117-residue polypeptide: Ribosome-binding factor A (117 aa).

It belongs to the RbfA family. Monomer. Binds 30S ribosomal subunits, but not 50S ribosomal subunits or 70S ribosomes.

The protein resides in the cytoplasm. Functionally, one of several proteins that assist in the late maturation steps of the functional core of the 30S ribosomal subunit. Associates with free 30S ribosomal subunits (but not with 30S subunits that are part of 70S ribosomes or polysomes). Required for efficient processing of 16S rRNA. May interact with the 5'-terminal helix region of 16S rRNA. The protein is Ribosome-binding factor A of Nitrosomonas europaea (strain ATCC 19718 / CIP 103999 / KCTC 2705 / NBRC 14298).